Here is a 443-residue protein sequence, read N- to C-terminus: MSVQVENLEHNMAKLTIEVAAEELEKALDSAYQKQKKQISVPGFRKGKVPRAMIEKMYGAGVFYEDAANILMQQTYAGAVDESGVDIVSRPTVEVTQIEKGQPFIYTAEVAVRPEVTLGKYMGVTVTKIDTSVSDEEVDAELENQRNKNARTVTVTDRPVAEGDTAVIDFEGFVDGVAFEGGKGENHPLEIGSHTFIDTFEDQLVGKNTGDEVEVNVTFPEKYQAEDLAGKPATFKVKINEIKAKELPELDDEFAQDAAGVDTLAEYKEEIKKNLTEKKETEAKKTKEDEAIQKIIDKSKMDLPEAMIETQCETMVEEFAQRIAQSGLTMEQYLQFSGMTVDQLKDQVRPEATTRIQSSLVLEQIAKEENIEVTDADIDAEVEKMAKAYGMEADKLKEYMGDAEKESMKKDIAITKAVDLIMDNVKERAKAKKKADAEESTEE.

The PPIase FKBP-type domain occupies 163-248 (GDTAVIDFEG…INEIKAKELP (86 aa)).

It belongs to the FKBP-type PPIase family. Tig subfamily.

The protein localises to the cytoplasm. The enzyme catalyses [protein]-peptidylproline (omega=180) = [protein]-peptidylproline (omega=0). Functionally, involved in protein export. Acts as a chaperone by maintaining the newly synthesized protein in an open conformation. Functions as a peptidyl-prolyl cis-trans isomerase. The chain is Trigger factor from Agathobacter rectalis (strain ATCC 33656 / DSM 3377 / JCM 17463 / KCTC 5835 / VPI 0990) (Eubacterium rectale).